The primary structure comprises 450 residues: Probable ECA polymerase (450 aa).

The next 11 membrane-spanning stretches (helical) occupy residues 6–26 (FSGL…LTWF), 37–57 (VFFS…TSVL), 63–83 (VGVA…CFYA), 118–138 (VILM…NGFL), 155–175 (GVAL…VYFL), 181–201 (AWLF…MIVG), 207–227 (IIIA…ISLW), 228–248 (MLAA…LKRY), 341–361 (LVVM…GLII), 378–398 (YKAA…IVLA), and 410–430 (VFFI…YWLF).

Belongs to the WzyE family. As to quaternary structure, probably part of a complex composed of WzxE, WzyE and WzzE.

Its subcellular location is the cell inner membrane. It participates in bacterial outer membrane biogenesis; enterobacterial common antigen biosynthesis. Functionally, probably involved in the polymerization of enterobacterial common antigen (ECA) trisaccharide repeat units. The polypeptide is Probable ECA polymerase (Shigella flexneri).